Here is a 380-residue protein sequence, read N- to C-terminus: Glucose-1-phosphate adenylyltransferase (380 aa).

Residues G164, 179-180, and S190 contribute to the alpha-D-glucose 1-phosphate site; that span reads EK.

Belongs to the bacterial/plant glucose-1-phosphate adenylyltransferase family. As to quaternary structure, homotetramer.

It carries out the reaction alpha-D-glucose 1-phosphate + ATP + H(+) = ADP-alpha-D-glucose + diphosphate. The protein operates within glycan biosynthesis; glycogen biosynthesis. Functionally, involved in the biosynthesis of ADP-glucose, a building block required for the elongation reactions to produce glycogen. Catalyzes the reaction between ATP and alpha-D-glucose 1-phosphate (G1P) to produce pyrophosphate and ADP-Glc. The protein is Glucose-1-phosphate adenylyltransferase of Lactococcus lactis subsp. lactis (strain IL1403) (Streptococcus lactis).